The primary structure comprises 222 residues: Protein-L-isoaspartate O-methyltransferase (222 aa).

Residue serine 70 is part of the active site.

Belongs to the methyltransferase superfamily. L-isoaspartyl/D-aspartyl protein methyltransferase family.

It is found in the cytoplasm. The enzyme catalyses [protein]-L-isoaspartate + S-adenosyl-L-methionine = [protein]-L-isoaspartate alpha-methyl ester + S-adenosyl-L-homocysteine. Functionally, catalyzes the methyl esterification of L-isoaspartyl residues in peptides and proteins that result from spontaneous decomposition of normal L-aspartyl and L-asparaginyl residues. It plays a role in the repair and/or degradation of damaged proteins. This Jannaschia sp. (strain CCS1) protein is Protein-L-isoaspartate O-methyltransferase.